Here is a 147-residue protein sequence, read N- to C-terminus: MVHLTGEEKAAVTALWGKVNVXEVGGEALGRLLVVYPWTQRFFESFGDLSSPDAVMSNXKVKAHGKKVLGAFSDGLAHLDNLKSTFAQLSELHCDKLHVDPENFRLLGNVLVCVLAHHFGKEFTPQVQAAYQKVVAGVANALAHKYH.

The residue at position 2 (valine 2) is an N-acetylvaline. Residues 3–147 enclose the Globin domain; it reads HLTGEEKAAV…VANALAHKYH (145 aa). At threonine 13 the chain carries Phosphothreonine. A Phosphoserine modification is found at serine 45. N6-acetyllysine is present on lysine 60. Residue histidine 64 participates in heme b binding. Lysine 83 carries the post-translational modification N6-acetyllysine. Residue histidine 93 participates in heme b binding. Cysteine 94 bears the S-nitrosocysteine mark. Lysine 145 carries the post-translational modification N6-acetyllysine.

The protein belongs to the globin family. Heterotetramer of two alpha chains and two beta chains. In terms of tissue distribution, red blood cells.

Functionally, involved in oxygen transport from the lung to the various peripheral tissues. The protein is Hemoglobin subunit beta (HBB) of Cheracebus torquatus (Collared titi monkey).